Here is a 204-residue protein sequence, read N- to C-terminus: MKLSGHGLRCVRGGREVFSGLDVAAESGRAVAITGPNGAGKTSLLRLLAGLLALEGGSIGLEGGDPELTLPEQAHYLGHRDALKPALSVSENLSFWRGFLGGASRASGPDAAQALAAVGLDHVAHLPAAYLSAGQRRRLSIARLLAVKRPVWLLDEPTSALDVAGQSAFAAIMTGHLAGGGIILAATHTPLGIAARELRIGGTT.

One can recognise an ABC transporter domain in the interval 3–204; sequence LSGHGLRCVR…ARELRIGGTT (202 aa). Position 35–42 (35–42) interacts with ATP; it reads GPNGAGKT.

The protein belongs to the ABC transporter superfamily. CcmA exporter (TC 3.A.1.107) family. The complex is composed of two ATP-binding proteins (CcmA) and two transmembrane proteins (CcmB).

The protein localises to the cell inner membrane. It carries out the reaction heme b(in) + ATP + H2O = heme b(out) + ADP + phosphate + H(+). Functionally, part of the ABC transporter complex CcmAB involved in the biogenesis of c-type cytochromes; once thought to export heme, this seems not to be the case, but its exact role is uncertain. Responsible for energy coupling to the transport system. The sequence is that of Cytochrome c biogenesis ATP-binding export protein CcmA from Nitrobacter hamburgensis (strain DSM 10229 / NCIMB 13809 / X14).